The sequence spans 250 residues: 5-oxoprolinase subunit A (250 aa).

Belongs to the LamB/PxpA family. Forms a complex composed of PxpA, PxpB and PxpC.

It catalyses the reaction 5-oxo-L-proline + ATP + 2 H2O = L-glutamate + ADP + phosphate + H(+). Catalyzes the cleavage of 5-oxoproline to form L-glutamate coupled to the hydrolysis of ATP to ADP and inorganic phosphate. In Staphylococcus aureus (strain MW2), this protein is 5-oxoprolinase subunit A.